Here is a 381-residue protein sequence, read N- to C-terminus: Succinate--CoA ligase [ADP-forming] subunit beta (381 aa).

In terms of domain architecture, ATP-grasp spans 9-236 (KTIFADAGIP…ESYEDDLERK (228 aa)). ATP is bound by residues Lys-45, 52-54 (GRG), Glu-91, Val-94, and Glu-99. Residues Asn-191 and Asp-205 each contribute to the Mg(2+) site. Residues Asn-256 and 313–315 (GIT) contribute to the substrate site.

The protein belongs to the succinate/malate CoA ligase beta subunit family. As to quaternary structure, heterotetramer of two alpha and two beta subunits. Mg(2+) serves as cofactor.

The enzyme catalyses succinate + ATP + CoA = succinyl-CoA + ADP + phosphate. It catalyses the reaction GTP + succinate + CoA = succinyl-CoA + GDP + phosphate. Its pathway is carbohydrate metabolism; tricarboxylic acid cycle; succinate from succinyl-CoA (ligase route): step 1/1. In terms of biological role, succinyl-CoA synthetase functions in the citric acid cycle (TCA), coupling the hydrolysis of succinyl-CoA to the synthesis of either ATP or GTP and thus represents the only step of substrate-level phosphorylation in the TCA. The beta subunit provides nucleotide specificity of the enzyme and binds the substrate succinate, while the binding sites for coenzyme A and phosphate are found in the alpha subunit. This is Succinate--CoA ligase [ADP-forming] subunit beta from Halorubrum lacusprofundi (strain ATCC 49239 / DSM 5036 / JCM 8891 / ACAM 34).